A 1190-amino-acid polypeptide reads, in one-letter code: Phosphatidylinositol 3,4,5-trisphosphate 5-phosphatase 1 (1190 aa).

The SH2 domain maps to 8–104 (WNHGNITRSK…GLVTHLQFPV (97 aa)). The span at 111-120 (AIDEPEEDTE) shows a compositional bias: acidic residues. The tract at residues 111–130 (AIDEPEEDTESVMSPPELPP) is disordered. The SH3-binding 1 signature appears at 126–131 (PELPPR). Residue S245 is modified to Phosphoserine. The NPXY motif 1 signature appears at 914–917 (NPNY). Y917 carries the phosphotyrosine modification. A Phosphoserine modification is found at S934. At Y944 the chain carries Phosphotyrosine. The tract at residues 946-1190 (QLPKDSSLGP…ESLLGRTAMQ (245 aa)) is disordered. The span at 961–971 (PPTPPSQPPLS) shows a compositional bias: pro residues. A Phosphothreonine modification is found at T963. S966 and S971 each carry phosphoserine. The short motif at 969 to 974 (PLSPKK) is the SH3-binding 2 element. Positions 989 to 998 (QETRPGDLGK) are enriched in basic and acidic residues. The interaction with DAB2 stretch occupies residues 1014 to 1028 (MFENPLYGSVSPFPK). Residues 1017–1020 (NPLY) carry the NPXY motif 2 motif. Y1020 carries the post-translational modification Phosphotyrosine. Basic and acidic residues predominate over residues 1031-1045 (PRKEQESPKMMRKEP). The SH3-binding 3 motif lies at 1038–1049 (PKMMRKEPPPCP). Residues 1140-1149 (IPAPRPPLPV) are compositionally biased toward pro residues. Positions 1161 to 1183 (KGRDYRDNTELPHHGKHRQEESL) are enriched in basic and acidic residues.

The protein belongs to the inositol 1,4,5-trisphosphate 5-phosphatase family. In terms of assembly, interacts with tyrosine phosphorylated forms of SHC1. Interacts with tyrosine phosphorylated form of DOK1. Interacts with tyrosine phosphorylated form of DOK3. Interacts with tyrosine phosphorylated form of SLAMF1/CD150. Interacts with PTPN11/SHP-2 in response to IL-3. Interacts with receptor EPOR. Interacts with receptors MS4A2/FCER1B and FCER1G. Interacts with receptors FCGR2B and FCGR3. Interacts with receptor FCGR2A, leading to regulate gene expression during the phagocytic process. Interacts with GRB2. Interacts with PLCG1. Interacts with tyrosine kinases SRC and TEC. Interacts with c-Met/MET. Interacts with MILR1 (tyrosine-phosphorylated). Can weakly interact (via NPXY motif 2) with DAB2 (via PID domain); the interaction is impaired by tyrosine phosphorylation of the NPXY motif. Interacts (via SH2 domain) with tyrosine phosphorylated KLRC1 (via ITIM). Interacts with MPL/TPOR. Post-translationally, tyrosine phosphorylated by the members of the SRC family after exposure to a diverse array of extracellular stimuli such as cytokines, growth factors, antibodies, chemokines, integrin ligands and hypertonic and oxidative stress. Phosphorylated upon IgG receptor FCGR2B-binding.

Its subcellular location is the cytoplasm. It is found in the cell membrane. It localises to the membrane raft. The protein localises to the cytoskeleton. It carries out the reaction a 1,2-diacyl-sn-glycero-3-phospho-(1D-myo-inositol-3,4,5-trisphosphate) + H2O = a 1,2-diacyl-sn-glycero-3-phospho-(1D-myo-inositol-3,4-bisphosphate) + phosphate. The enzyme catalyses 1D-myo-inositol 1,3,4,5-tetrakisphosphate + H2O = 1D-myo-inositol 1,3,4-trisphosphate + phosphate. The catalysed reaction is a 1,2-diacyl-sn-glycero-3-phospho-(1D-myo-inositol-4,5-bisphosphate) + H2O = a 1,2-diacyl-sn-glycero-3-phospho-(1D-myo-inositol 4-phosphate) + phosphate. With respect to regulation, activated upon translocation to the sites of synthesis of PtdIns(3,4,5)P3 in the membrane. Functionally, phosphatidylinositol (PtdIns) phosphatase that specifically hydrolyzes the 5-phosphate of phosphatidylinositol-3,4,5-trisphosphate (PtdIns(3,4,5)P3) to produce PtdIns(3,4)P2, thereby negatively regulating the PI3K (phosphoinositide 3-kinase) pathways. Also able to hydrolyze the 5-phosphate of phosphatidylinositol-4,5-bisphosphate (PtdIns(4,5)P3) and inositol 1,3,4,5-tetrakisphosphate. Acts as a negative regulator of B-cell antigen receptor signaling. Mediates signaling from the FC-gamma-RIIB receptor (FCGR2B), playing a central role in terminating signal transduction from activating immune/hematopoietic cell receptor systems. Acts as a negative regulator of myeloid cell proliferation/survival and chemotaxis, mast cell degranulation, immune cells homeostasis, integrin alpha-IIb/beta-3 signaling in platelets and JNK signaling in B-cells. Regulates proliferation of osteoclast precursors, macrophage programming, phagocytosis and activation and is required for endotoxin tolerance. Involved in the control of cell-cell junctions, CD32a signaling in neutrophils and modulation of EGF-induced phospholipase C activity. Key regulator of neutrophil migration, by governing the formation of the leading edge and polarization required for chemotaxis. Modulates FCGR3/CD16-mediated cytotoxicity in NK cells. Mediates the activin/TGF-beta-induced apoptosis through its Smad-dependent expression. In Rattus norvegicus (Rat), this protein is Phosphatidylinositol 3,4,5-trisphosphate 5-phosphatase 1 (Inpp5d).